The chain runs to 281 residues: Putative zinc-binding protein ORF11 (281 aa).

The polypeptide is Putative zinc-binding protein ORF11 (ORF11) (Ictaluridae (bullhead catfishes)).